A 637-amino-acid polypeptide reads, in one-letter code: 1-deoxy-D-xylulose-5-phosphate synthase (637 aa).

Residues H76 and 117-119 (GHS) each bind thiamine diphosphate. Mg(2+) is bound at residue D148. Residues 149–150 (GA), N177, Y294, and E381 each bind thiamine diphosphate. N177 contributes to the Mg(2+) binding site.

This sequence belongs to the transketolase family. DXPS subfamily. As to quaternary structure, homodimer. Requires Mg(2+) as cofactor. It depends on thiamine diphosphate as a cofactor.

The catalysed reaction is D-glyceraldehyde 3-phosphate + pyruvate + H(+) = 1-deoxy-D-xylulose 5-phosphate + CO2. Its pathway is metabolic intermediate biosynthesis; 1-deoxy-D-xylulose 5-phosphate biosynthesis; 1-deoxy-D-xylulose 5-phosphate from D-glyceraldehyde 3-phosphate and pyruvate: step 1/1. Functionally, catalyzes the acyloin condensation reaction between C atoms 2 and 3 of pyruvate and glyceraldehyde 3-phosphate to yield 1-deoxy-D-xylulose-5-phosphate (DXP). The chain is 1-deoxy-D-xylulose-5-phosphate synthase from Neisseria meningitidis serogroup B (strain ATCC BAA-335 / MC58).